The sequence spans 102 residues: ATP-dependent Clp protease adapter protein ClpS (102 aa).

This sequence belongs to the ClpS family. As to quaternary structure, binds to the N-terminal domain of the chaperone ClpA.

Functionally, involved in the modulation of the specificity of the ClpAP-mediated ATP-dependent protein degradation. In Nitrosospira multiformis (strain ATCC 25196 / NCIMB 11849 / C 71), this protein is ATP-dependent Clp protease adapter protein ClpS.